We begin with the raw amino-acid sequence, 801 residues long: Phenylalanine--tRNA ligase beta subunit (801 aa).

Positions 39–152 (ARAFSGVVVG…TDAPIGTDIR (114 aa)) constitute a tRNA-binding domain. A B5 domain is found at 407-482 (PARAPITLPI…RIYGYDNIPS (76 aa)). Mg(2+) contacts are provided by Asp460, Asp466, Glu469, and Glu470. The FDX-ACB domain occupies 706-799 (SKFPQVRRDI…LTVEHSAQLR (94 aa)).

It belongs to the phenylalanyl-tRNA synthetase beta subunit family. Type 1 subfamily. In terms of assembly, tetramer of two alpha and two beta subunits. Mg(2+) serves as cofactor.

It localises to the cytoplasm. It carries out the reaction tRNA(Phe) + L-phenylalanine + ATP = L-phenylalanyl-tRNA(Phe) + AMP + diphosphate + H(+). The sequence is that of Phenylalanine--tRNA ligase beta subunit from Psychrobacter arcticus (strain DSM 17307 / VKM B-2377 / 273-4).